The sequence spans 1254 residues: Structural polyprotein (1254 aa).

The necessary for nucleocapsid assembly and virus assembly stretch occupies residues 1–33 (MFPFQPMYPMQPMPYRNPFAAPRRPWFPRTDPF). The segment at 33-68 (FLAMQVQELTRSMANLTFKQRRGAPPEGPPAKKSKR) is host transcription inhibition. The Supraphysiological nuclear export signal signature appears at 41 to 48 (LTRSMANL). N-linked (GlcNAc...) asparagine; by host glycosylation is present at asparagine 47. Residues 48–118 (LTFKQRRGAP…KKPGKRQRMV (71 aa)) are disordered. The Nuclear localization signal motif lies at 64–68 (KKSKR). Over residues 76-91 (GGQRKKKKNEGKKKAK) the composition is skewed to basic residues. Residues 90 to 126 (AKTGPPNLKTQNGNKKKTNKKPGKRQRMVMKLESDKT) are binding to the viral RNA. A phosphothreonine mark is found at threonine 92 and threonine 107. Residues 103 to 117 (NKKKTNKKPGKRQRM) show a composition bias toward basic residues. Residues 111-125 (PGKRQRMVMKLESDK) form a ribosome-binding region. At serine 123 the chain carries Phosphoserine. One can recognise a Peptidase S3 domain in the interval 125 to 274 (KTFPIMLEGK…KYTPENCEQW (150 aa)). Threonine 126 is modified (phosphothreonine). The active-site Charge relay system is histidine 151. The tract at residues 167–172 (KKASKY) is interaction with spike glycoprotein E2. Catalysis depends on charge relay system residues aspartate 173 and serine 225. The interval 259-263 (EKGVT) is interaction with spike glycoprotein E2. The interval 275–286 (SLVTTMCLLANV) is functions as an uncleaved signal peptide for the precursor of protein E3/E2. The Extracellular segment spans residues 275-702 (SLVTTMCLLA…YHRYPMSTIT (428 aa)). 7 cysteine pairs are disulfide-bonded: cysteine 281-cysteine 290, cysteine 352-cysteine 456, cysteine 355-cysteine 360, cysteine 423-cysteine 437, cysteine 484-cysteine 599, cysteine 533-cysteine 559, and cysteine 535-cysteine 553. N-linked (GlcNAc...) asparagine; by host glycosylation is present at asparagine 285. 2 N-linked (GlcNAc...) asparagine; by host glycosylation sites follow: asparagine 545 and asparagine 651. A helical membrane pass occupies residues 703 to 723 (GLSICAAIVAVSIAASTWLLC). An interaction with the capsid protein region spans residues 724-728 (RSRAS). Residues 724–756 (RSRASCLTPYRLTPNAKMPLCLAVLCCARSARA) are Cytoplasmic-facing. 3 S-palmitoyl cysteine; by host lipidation sites follow: cysteine 729, cysteine 749, and cysteine 750. Cysteine 729 and cysteine 750 are disulfide-bonded. Residues 735–754 (LTPNAKMPLCLAVLCCARSA) are transient transmembrane before p62-6K protein processing. Residues 757 to 768 (ETTWESLDHLWN) lie on the Extracellular side of the membrane. The chain crosses the membrane as a helical span at residues 769-789 (NNQQMFWTQLLIPLAALIVVT). Position 790 (arginine 790) is a topological domain, cytoplasmic. A helical transmembrane segment spans residues 791-811 (LLKCMCCVVPFLVVAGAAGAG). Topologically, residues 812 to 1224 (AYEHATTMPN…SKTAWTWLTS (413 aa)) are extracellular. 4 disulfides stabilise this stretch: cysteine 861-cysteine 926, cysteine 874-cysteine 906, cysteine 875-cysteine 908, and cysteine 880-cysteine 890. An E1 fusion peptide loop region spans residues 896–913 (VYPFMWGGAYCFCDTENT). 2 N-linked (GlcNAc...) asparagine; by host glycosylation sites follow: asparagine 946 and asparagine 1082. 4 disulfide bridges follow: cysteine 1071–cysteine 1083, cysteine 1113–cysteine 1188, cysteine 1118–cysteine 1192, and cysteine 1140–cysteine 1182. The helical transmembrane segment at 1225–1245 (LLGGSAVIIIIGLVLATLVAM) threads the bilayer. Residues 1246–1254 (YVLTNQKHN) lie on the Cytoplasmic side of the membrane.

Homodimer. Homomultimer. Interacts with host karyopherin KPNA4; this interaction allows the nuclear import of the viral capsid protein. Interacts with spike glycoprotein E2. Interacts with host IRAK1; the interaction leads to inhibition of IRAK1-dependent signaling. Part of a tetrameric complex composed of host CRM1, host importin alpha/beta dimer and the viral capsid; this complex blocks the receptor-mediated transport through the nuclear pore. Interacts with host phosphatase PPP1CA; this interaction dephosphorylates the capsid protein, which increases its ability to bind to the viral genome. As to quaternary structure, the precursor of protein E3/E2 and E1 form a heterodimer shortly after synthesis. In terms of assembly, interacts with spike glycoprotein E2. The precursor of protein E3/E2 and E1 form a heterodimer shortly after synthesis. Processing of the precursor of protein E3/E2 into E2 and E3 results in a heterodimer of the spike glycoproteins E2 and E1. Spike at virion surface are constituted of three E2-E1 heterodimers. After target cell attachment and endocytosis, E1 change conformation to form homotrimers. Interacts with 6K protein. Interacts with host LDLRAD3; this interaction mediates viral entry to the host cell. Interacts with spike glycoprotein E1. Processing of the precursor of protein E3/E2 into E2 and E3 results in a heterodimer of the spike glycoproteins E2 and E1. Spike at virion surface are constituted of a trimer of E2-E1 heterodimers. Interacts with 6K protein. Interacts with host LDLRAD3; this interaction mediates viral entry to the host cell. As to quaternary structure, oligomer. Interacts with spike glycoprotein E1. Interacts with spike glycoprotein E2. Post-translationally, structural polyprotein: Specific enzymatic cleavages in vivo yield mature proteins. Capsid protein is auto-cleaved during polyprotein translation, unmasking a signal peptide at the N-terminus of the precursor of E3/E2. The remaining polyprotein is then targeted to the host endoplasmic reticulum, where host signal peptidase cleaves it into pE2, 6K and E1 proteins. pE2 is further processed to mature E3 and E2 by host furin in trans-Golgi vesicle. In terms of processing, phosphorylated on serine and threonine residues. Palmitoylated via thioester bonds. These palmitoylations may induce disruption of the C-terminus transmembrane. This would result in the reorientation of E2 C-terminus from lumenal to cytoplasmic side. Post-translationally, N-glycosylated. In terms of processing, palmitoylated via thioester bonds.

It is found in the virion. The protein resides in the host cytoplasm. It localises to the host cell membrane. The protein localises to the host nucleus. Its subcellular location is the virion membrane. It is found in the host Golgi apparatus. The protein resides in the host trans-Golgi network. It localises to the host endoplasmic reticulum. It catalyses the reaction Autocatalytic release of the core protein from the N-terminus of the togavirus structural polyprotein by hydrolysis of a -Trp-|-Ser- bond.. Its function is as follows. Forms an icosahedral capsid with a T=4 symmetry composed of 240 copies of the capsid protein surrounded by a lipid membrane through which penetrate 80 spikes composed of trimers of E1-E2 heterodimers. The capsid protein binds to the viral RNA genome at a site adjacent to a ribosome binding site for viral genome translation following genome release. Possesses a protease activity that results in its autocatalytic cleavage from the nascent structural protein. Following its self-cleavage, the capsid protein transiently associates with ribosomes, and within several minutes the protein binds to viral RNA and rapidly assembles into icosahedric core particles. The resulting nucleocapsid eventually associates with the cytoplasmic domain of the spike glycoprotein E2 at the cell membrane, leading to budding and formation of mature virions. In case of infection, new virions attach to target cells and after clathrin-mediated endocytosis their membrane fuses with the host endosomal membrane. This leads to the release of the nucleocapsid into the cytoplasm, followed by an uncoating event necessary for the genomic RNA to become accessible. The uncoating might be triggered by the interaction of capsid proteins with ribosomes. Binding of ribosomes would release the genomic RNA since the same region is genomic RNA-binding and ribosome-binding. Specifically inhibits interleukin-1 receptor-associated kinase 1/IRAK1-dependent signaling during viral entry, representing a means by which the alphaviruses may evade innate immune detection and activation prior to viral gene expression. Inhibits host transcription. Forms a tetrameric complex with XPO1/CRM1 and the nuclear import receptor importin. This complex blocks the central channel of host nuclear pores thereby inhibiting the receptor-mediated nuclear transport and thus the host mRNA and rRNA transcription. The inhibition of transcription is linked to a cytopathic effect on the host cell. Functionally, provides the signal sequence for the translocation of the precursor of protein E3/E2 to the host endoplasmic reticulum. Furin-cleaved E3 remains associated with spike glycoprotein E1 and mediates pH protection of the latter during the transport via the secretory pathway. After virion release from the host cell, the assembly protein E3 is gradually released in the extracellular space. Plays a role in viral attachment to target host cell, by binding to the cell receptor LDLRAD3. Synthesized as a p62 precursor which is processed by furin at the cell membrane just before virion budding, giving rise to E2-E1 heterodimer. The p62-E1 heterodimer is stable, whereas E2-E1 is unstable and dissociate at low pH. p62 is processed at the last step, presumably to avoid E1 fusion activation before its final export to cell surface. E2 C-terminus contains a transitory transmembrane that would be disrupted by palmitoylation, resulting in reorientation of the C-terminal tail from lumenal to cytoplasmic side. This step is critical since E2 C-terminus is involved in budding by interacting with capsid proteins. This release of E2 C-terminus in cytoplasm occurs lately in protein export, and precludes premature assembly of particles at the endoplasmic reticulum membrane. In terms of biological role, acts as a viroporin that participates in virus glycoprotein processing and transport to the plasma membrane, cell permeabilization and budding of viral particles. Disrupts the calcium homeostasis of the cell, probably at the endoplasmic reticulum level. This leads to cytoplasmic calcium elevation. Because of its lipophilic properties, the 6K protein is postulated to influence the selection of lipids that interact with the transmembrane domains of the glycoproteins, which, in turn, affects the deformability of the bilayer required for the extreme curvature that occurs as budding proceeds. Present in low amount in virions, about 3% compared to viral glycoproteins. Its function is as follows. Class II viral fusion protein. Fusion activity is inactive as long as E1 is bound to E2 in mature virion. After virus attachment to cell receptor LDLRAD3 and endocytosis, acidification of the endosome induce dissociation of E1/E2 heterodimer and concomitant trimerization of the E1 subunits. This E1 trimer is fusion active, and promotes release of viral nucleocapsid in cytoplasm after endosome and viral membrane fusion. Efficient fusion requires the presence of cholesterol and sphingolipid in the target membrane. The polypeptide is Structural polyprotein (Venezuelan equine encephalitis virus (strain Everglades Fe3-7c) (VEEV)).